Consider the following 334-residue polypeptide: Ribonucleoside-diphosphate reductase small chain (334 aa).

Fe cation is bound by residues Asp-77, Glu-108, and His-111. Tyr-115 is an active-site residue. Residues Glu-171, Glu-205, and His-208 each contribute to the Fe cation site.

The protein belongs to the ribonucleoside diphosphate reductase small chain family. In terms of assembly, heterotetramer composed of a homodimer of the large subunit (R1) and a homodimer of the small subunit (R2). Larger multisubunit protein complex are also active, composed of (R1)n(R2)n. Fe cation is required as a cofactor.

The catalysed reaction is a 2'-deoxyribonucleoside 5'-diphosphate + [thioredoxin]-disulfide + H2O = a ribonucleoside 5'-diphosphate + [thioredoxin]-dithiol. Its function is as follows. Ribonucleoside-diphosphate reductase holoenzyme provides the precursors necessary for viral DNA synthesis. Allows virus growth in non-dividing cells. Catalyzes the biosynthesis of deoxyribonucleotides from the corresponding ribonucleotides. The protein is Ribonucleoside-diphosphate reductase small chain of Ornithodoros (relapsing fever ticks).